A 982-amino-acid chain; its full sequence is Glycine dehydrogenase (decarboxylating) (982 aa).

Lysine 729 is modified (N6-(pyridoxal phosphate)lysine).

This sequence belongs to the GcvP family. The glycine cleavage system is composed of four proteins: P, T, L and H. It depends on pyridoxal 5'-phosphate as a cofactor.

The enzyme catalyses N(6)-[(R)-lipoyl]-L-lysyl-[glycine-cleavage complex H protein] + glycine + H(+) = N(6)-[(R)-S(8)-aminomethyldihydrolipoyl]-L-lysyl-[glycine-cleavage complex H protein] + CO2. In terms of biological role, the glycine cleavage system catalyzes the degradation of glycine. The P protein binds the alpha-amino group of glycine through its pyridoxal phosphate cofactor; CO(2) is released and the remaining methylamine moiety is then transferred to the lipoamide cofactor of the H protein. The chain is Glycine dehydrogenase (decarboxylating) from Ralstonia nicotianae (strain ATCC BAA-1114 / GMI1000) (Ralstonia solanacearum).